The primary structure comprises 466 residues: Ankyrin repeat and SOCS box protein 18 (466 aa).

ANK repeat units follow at residues 119-148 (ELTT…DPDA), 151-180 (GGRG…DPDL), 184-213 (EGLA…SVQR), 218-247 (GRDT…HVDA), 251-288 (RGET…EADA), and 292-321 (DERS…DAGA). The region spanning 405 to 463 (QMHKPFYQSLFALALTPRCLQHLCRCALRRLFGKRCFDLIPLLPLPKPLQNYLLLEPQG) is the SOCS box domain.

Belongs to the ankyrin SOCS box (ASB) family.

It participates in protein modification; protein ubiquitination. In terms of biological role, may be a substrate-recognition component of a SCF-like ECS (Elongin-Cullin-SOCS-box protein) E3 ubiquitin-protein ligase complex which mediates the ubiquitination and subsequent proteasomal degradation of target proteins. This Homo sapiens (Human) protein is Ankyrin repeat and SOCS box protein 18 (ASB18).